Consider the following 365-residue polypeptide: 3-dehydroquinate synthase (365 aa).

NAD(+) contacts are provided by residues 95–99, 119–120, Lys-132, and Lys-141; these read GVVGD and TT. Residues Glu-174, His-238, and His-255 each coordinate Zn(2+).

This sequence belongs to the sugar phosphate cyclases superfamily. Dehydroquinate synthase family. Requires Co(2+) as cofactor. The cofactor is Zn(2+). It depends on NAD(+) as a cofactor.

It localises to the cytoplasm. It catalyses the reaction 7-phospho-2-dehydro-3-deoxy-D-arabino-heptonate = 3-dehydroquinate + phosphate. The protein operates within metabolic intermediate biosynthesis; chorismate biosynthesis; chorismate from D-erythrose 4-phosphate and phosphoenolpyruvate: step 2/7. Its function is as follows. Catalyzes the conversion of 3-deoxy-D-arabino-heptulosonate 7-phosphate (DAHP) to dehydroquinate (DHQ). The polypeptide is 3-dehydroquinate synthase (Chlorobium chlorochromatii (strain CaD3)).